The primary structure comprises 218 residues: Capsid protein (218 aa).

Met1 is modified (N-acetylmethionine; by host). The tract at residues 1–28 (MDKSESTSAGRNRRRRPRRGSRSAPSSA) is disordered. Basic residues predominate over residues 11–21 (RNRRRRPRRGS).

Belongs to the cucumovirus capsid protein family.

The protein localises to the virion. In terms of biological role, capsid protein. Probably binds RNA and plays a role in packaging. This is Capsid protein from Cucumber mosaic virus (strain FC) (CMV).